Consider the following 520-residue polypeptide: BTB/POZ domain-containing protein At3g50780 (520 aa).

Positions Ser-43–Ser-68 are disordered. One can recognise a BTB domain in the interval Ala-127–Leu-196.

It functions in the pathway protein modification; protein ubiquitination. May act as a substrate-specific adapter of an E3 ubiquitin-protein ligase complex (CUL3-RBX1-BTB) which mediates the ubiquitination and subsequent proteasomal degradation of target proteins. The polypeptide is BTB/POZ domain-containing protein At3g50780 (Arabidopsis thaliana (Mouse-ear cress)).